The chain runs to 642 residues: Protein BZZ1 (642 aa).

An F-BAR domain is found at 6-272 (YKFSDELHDD…EIAKNEPVLD (267 aa)). Residues 113–190 (LDIAEKLKKL…QRNLKLSESD (78 aa)) are a coiled coil. The segment at 397–447 (FHDFKHVSFKLPTSCSYCREIIWGLSKRGCVCKNCGFKCHARCELLVPANC) adopts a Phorbol-ester/DAG-type zinc-finger fold. SH3 domains follow at residues 515-575 (ASKV…LNDE) and 584-642 (GDSS…VTDV).

The protein belongs to the BZZ1 family.

It is found in the cell tip. The protein resides in the cytoplasm. It localises to the cytoskeleton. The protein localises to the actin patch. Functionally, plays a role in endocytosis and trafficking to the vacuole. Functions with type I myosins to restore polarity of the actin cytoskeleton after NaCl stress. The chain is Protein BZZ1 (bzz1) from Schizosaccharomyces pombe (strain 972 / ATCC 24843) (Fission yeast).